Here is a 240-residue protein sequence, read N- to C-terminus: Methylthioribulose-1-phosphate dehydratase (240 aa).

Residue cysteine 99 coordinates substrate. Positions 116 and 118 each coordinate Zn(2+). Glutamate 145 (proton donor/acceptor) is an active-site residue. Position 201 (histidine 201) interacts with Zn(2+).

It belongs to the aldolase class II family. MtnB subfamily. Zn(2+) is required as a cofactor.

It is found in the cytoplasm. It carries out the reaction 5-(methylsulfanyl)-D-ribulose 1-phosphate = 5-methylsulfanyl-2,3-dioxopentyl phosphate + H2O. It participates in amino-acid biosynthesis; L-methionine biosynthesis via salvage pathway; L-methionine from S-methyl-5-thio-alpha-D-ribose 1-phosphate: step 2/6. Its function is as follows. Catalyzes the dehydration of methylthioribulose-1-phosphate (MTRu-1-P) into 2,3-diketo-5-methylthiopentyl-1-phosphate (DK-MTP-1-P). The polypeptide is Methylthioribulose-1-phosphate dehydratase (Paracoccidioides brasiliensis (strain Pb03)).